We begin with the raw amino-acid sequence, 159 residues long: Stress-induced protein 1 (159 aa).

Positions 33–141 (NNFNNIVPQQ…TVRALPIHTS (109 aa)) constitute a sHSP domain.

The protein belongs to the small heat shock protein (HSP20) family.

This chain is Stress-induced protein 1, found in Caenorhabditis elegans.